Reading from the N-terminus, the 438-residue chain is 23S rRNA (uracil(1939)-C(5))-methyltransferase RlmD (438 aa).

The region spanning 4-68 (FYTPGRRTAT…RHFARGRVTR (65 aa)) is the TRAM domain. C81, C87, C90, and C167 together coordinate [4Fe-4S] cluster. 6 residues coordinate S-adenosyl-L-methionine: Q269, F298, N303, E319, N346, and D367. The active-site Nucleophile is C393.

It belongs to the class I-like SAM-binding methyltransferase superfamily. RNA M5U methyltransferase family. RlmD subfamily.

The enzyme catalyses uridine(1939) in 23S rRNA + S-adenosyl-L-methionine = 5-methyluridine(1939) in 23S rRNA + S-adenosyl-L-homocysteine + H(+). In terms of biological role, catalyzes the formation of 5-methyl-uridine at position 1939 (m5U1939) in 23S rRNA. This Edwardsiella ictaluri (strain 93-146) protein is 23S rRNA (uracil(1939)-C(5))-methyltransferase RlmD.